A 259-amino-acid polypeptide reads, in one-letter code: Deoxyribose-phosphate aldolase (259 aa).

Residue aspartate 102 is the Proton donor/acceptor of the active site. Residue lysine 167 is the Schiff-base intermediate with acetaldehyde of the active site. Lysine 201 acts as the Proton donor/acceptor in catalysis.

This sequence belongs to the DeoC/FbaB aldolase family. DeoC type 2 subfamily.

Its subcellular location is the cytoplasm. It catalyses the reaction 2-deoxy-D-ribose 5-phosphate = D-glyceraldehyde 3-phosphate + acetaldehyde. Its pathway is carbohydrate degradation; 2-deoxy-D-ribose 1-phosphate degradation; D-glyceraldehyde 3-phosphate and acetaldehyde from 2-deoxy-alpha-D-ribose 1-phosphate: step 2/2. Functionally, catalyzes a reversible aldol reaction between acetaldehyde and D-glyceraldehyde 3-phosphate to generate 2-deoxy-D-ribose 5-phosphate. The chain is Deoxyribose-phosphate aldolase from Salmonella dublin (strain CT_02021853).